Consider the following 157-residue polypeptide: MSSVVETVTNLVTPILDENHFELVDVEFVKEGKSWYLRVYIDKPNGINIEECALVSDKLSEKLDSCDPDPIPQAYYLEVSSPGAERPLKKEKDYERALNKYIHISLYQAIDGQKVYEGTMVDLNKETLTLEYRVKTRTVTKTFDRNKIAKARLAIKF.

Belongs to the RimP family.

It localises to the cytoplasm. Its function is as follows. Required for maturation of 30S ribosomal subunits. The polypeptide is Ribosome maturation factor RimP (Ligilactobacillus salivarius (strain UCC118) (Lactobacillus salivarius)).